A 72-amino-acid chain; its full sequence is Translation initiation factor IF-1 (72 aa).

Residues 1–72 form the S1-like domain; the sequence is MAKEESIEVE…SKGRITYRYK (72 aa).

It belongs to the IF-1 family. As to quaternary structure, component of the 30S ribosomal translation pre-initiation complex which assembles on the 30S ribosome in the order IF-2 and IF-3, IF-1 and N-formylmethionyl-tRNA(fMet); mRNA recruitment can occur at any time during PIC assembly.

The protein localises to the cytoplasm. In terms of biological role, one of the essential components for the initiation of protein synthesis. Stabilizes the binding of IF-2 and IF-3 on the 30S subunit to which N-formylmethionyl-tRNA(fMet) subsequently binds. Helps modulate mRNA selection, yielding the 30S pre-initiation complex (PIC). Upon addition of the 50S ribosomal subunit IF-1, IF-2 and IF-3 are released leaving the mature 70S translation initiation complex. The protein is Translation initiation factor IF-1 of Chlorobaculum tepidum (strain ATCC 49652 / DSM 12025 / NBRC 103806 / TLS) (Chlorobium tepidum).